We begin with the raw amino-acid sequence, 857 residues long: A-kinase anchor protein 1, mitochondrial (857 aa).

The transit peptide at 1-29 (MAIQLRSLFPLALPGMLALLGWWWFFSRK) directs the protein to the mitochondrion. Ser55 is subject to Phosphoserine. The disordered stretch occupies residues 65 to 121 (VAPTVTQPPGREEQRCVDKPSTEPLALPRTRQVRRRSESSGNLPSVADTRSQPGPCR). Residues 74 to 85 (GREEQRCVDKPS) are compositionally biased toward basic and acidic residues. Residues Ser101, Ser103, and Ser164 each carry the phosphoserine modification. Polar residues predominate over residues 103 to 116 (SSGNLPSVADTRSQ). 2 disordered regions span residues 165 to 198 (ALGKTPGRGWPSPYAASGEKARETGGTEGTGDAV) and 260 to 303 (FVEP…VPEN). Over residues 286-299 (SDRDLAGELDKDET) the composition is skewed to basic and acidic residues. Residues 306–319 (IKQAAFQLISQVIL) are PKA-RII subunit binding domain. Disordered stretches follow at residues 336 to 437 (QVHP…NPRG), 466 to 497 (STSGLEDSCTETISSSGDKAMTPPLPVSTQPF), and 512 to 554 (EDGW…QAGS). Polar residues predominate over residues 354–379 (PASQETSLGQDTSDPASTRTGATASP). Thr401 carries the phosphothreonine modification. Polar residues predominate over residues 466 to 482 (STSGLEDSCTETISSSG). Thr487 carries the phosphothreonine modification. Ser527 and Ser546 each carry phosphoserine. The segment covering 545 to 554 (DSPQSVQAGS) has biased composition (polar residues). In terms of domain architecture, KH spans 561 to 625 (LIIWEIEVPK…HHVDKALNLI (65 aa)). The Tudor domain maps to 712-771 (PVEITVICAAPGADGAWWRAQVVASYEETNEVEIRYVDYGGYKRVKVDVLRQIRSDFVTL).

In terms of assembly, interacts with SLC8A3. Interacts with CFAP91. Interacts with CLPB. Interacts with NDUFS1. As to expression, highest expression in testis, heart, liver, skeletal muscle, intestine and kidney, followed by brain and lung. No expression in spleen. Isoform 1/D-AKAP1A is expressed predominantly in testis whereas isoform 4/D-AKAP1D is expressed primarily in liver. Expression is decreased in hearts of diabetic mice (at protein level).

Its subcellular location is the mitochondrion outer membrane. The protein localises to the mitochondrion. It is found in the endoplasmic reticulum. Differentially targeted protein that binds to type I and II regulatory subunits of protein kinase A. Anchors them to the cytoplasmic face of the mitochondrial outer membrane or allows them to reside in the endoplasmic reticulum. Involved in mitochondrial-mediated antiviral innate immunity. Promotes translocation of NDUFS1 into mitochondria to regulate mitochondrial membrane respiratory chain NADH dehydrogenase (Complex I) activity. Under diabetic conditions, myocardial AKAP1 expression decreases which blocks the translocation of NDUFS1 from the cytosol to mitochondria. Reduction of NDUFS1 in mitochondria decreases ATP production and increases mitochondrial ROS level, which causes mitochondrial dysfunction and cell apoptosis, respectively, thereby leading to cardiac dysfunction. This chain is A-kinase anchor protein 1, mitochondrial, found in Mus musculus (Mouse).